Reading from the N-terminus, the 141-residue chain is Hemoglobin subunit alpha-1/2 (141 aa).

Positions 1–141 constitute a Globin domain; it reads VLSPADKTNV…VSTVLTSKYR (141 aa). Residue Ser-3 is modified to Phosphoserine. Lys-7 is subject to N6-succinyllysine. A Phosphothreonine modification is found at Thr-8. At Lys-11 the chain carries N6-succinyllysine. Lys-16 carries the post-translational modification N6-acetyllysine; alternate. Lys-16 is subject to N6-succinyllysine; alternate. At Tyr-24 the chain carries Phosphotyrosine. Ser-35 is modified (phosphoserine). Lys-40 is subject to N6-succinyllysine. Ser-49 is modified (phosphoserine). Residue His-58 participates in O2 binding. Residue His-87 participates in heme b binding. Position 102 is a phosphoserine (Ser-102). Phosphothreonine is present on Thr-108. A phosphoserine mark is found at Ser-124 and Ser-131. Phosphothreonine is present on residues Thr-134 and Thr-137. Phosphoserine is present on Ser-138.

Belongs to the globin family. Heterotetramer of two alpha chains and two beta chains. As to expression, red blood cells.

Its function is as follows. Involved in oxygen transport from the lung to the various peripheral tissues. This chain is Hemoglobin subunit alpha-1/2, found in Macaca sinica (Toque macaque).